The following is a 68-amino-acid chain: DNA-directed RNA polymerase subunit Rpo10 (68 aa).

Zn(2+) is bound by residues cysteine 7, cysteine 10, cysteine 44, and cysteine 45.

It belongs to the archaeal Rpo10/eukaryotic RPB10 RNA polymerase subunit family. As to quaternary structure, part of the RNA polymerase complex. It depends on Zn(2+) as a cofactor.

The protein localises to the cytoplasm. The catalysed reaction is RNA(n) + a ribonucleoside 5'-triphosphate = RNA(n+1) + diphosphate. Its function is as follows. DNA-dependent RNA polymerase (RNAP) catalyzes the transcription of DNA into RNA using the four ribonucleoside triphosphates as substrates. This chain is DNA-directed RNA polymerase subunit Rpo10, found in Methanococcus maripaludis (strain C7 / ATCC BAA-1331).